Here is a 75-residue protein sequence, read N- to C-terminus: Small ribosomal subunit protein bS18 (75 aa).

Belongs to the bacterial ribosomal protein bS18 family. As to quaternary structure, part of the 30S ribosomal subunit. Forms a tight heterodimer with protein bS6.

In terms of biological role, binds as a heterodimer with protein bS6 to the central domain of the 16S rRNA, where it helps stabilize the platform of the 30S subunit. This chain is Small ribosomal subunit protein bS18, found in Hydrogenovibrio crunogenus (strain DSM 25203 / XCL-2) (Thiomicrospira crunogena).